Reading from the N-terminus, the 237-residue chain is Pyridoxine 5'-phosphate synthase (237 aa).

3-amino-2-oxopropyl phosphate contacts are provided by asparagine 7 and arginine 18. The Proton acceptor role is filled by histidine 43. 1-deoxy-D-xylulose 5-phosphate-binding residues include arginine 45 and histidine 50. Glutamate 70 serves as the catalytic Proton acceptor. Threonine 100 provides a ligand contact to 1-deoxy-D-xylulose 5-phosphate. The Proton donor role is filled by histidine 190. 3-amino-2-oxopropyl phosphate contacts are provided by residues aspartate 191 and 213–214; that span reads GH.

Belongs to the PNP synthase family. As to quaternary structure, homooctamer; tetramer of dimers.

Its subcellular location is the cytoplasm. It carries out the reaction 3-amino-2-oxopropyl phosphate + 1-deoxy-D-xylulose 5-phosphate = pyridoxine 5'-phosphate + phosphate + 2 H2O + H(+). Its pathway is cofactor biosynthesis; pyridoxine 5'-phosphate biosynthesis; pyridoxine 5'-phosphate from D-erythrose 4-phosphate: step 5/5. In terms of biological role, catalyzes the complicated ring closure reaction between the two acyclic compounds 1-deoxy-D-xylulose-5-phosphate (DXP) and 3-amino-2-oxopropyl phosphate (1-amino-acetone-3-phosphate or AAP) to form pyridoxine 5'-phosphate (PNP) and inorganic phosphate. In Bacteroides thetaiotaomicron (strain ATCC 29148 / DSM 2079 / JCM 5827 / CCUG 10774 / NCTC 10582 / VPI-5482 / E50), this protein is Pyridoxine 5'-phosphate synthase.